A 273-amino-acid polypeptide reads, in one-letter code: Fos-related antigen 1 (273 aa).

2 disordered regions span residues 1 to 46 (MYRD…IDSS) and 60 to 114 (GPTG…RRER). Positions 7 to 35 (EPGPSSGAGSPYGRPAQPPQAQAQTAQQQ) are enriched in low complexity. In terms of domain architecture, bZIP spans 105–168 (EERRRVRRER…ERLELVLEAH (64 aa)). Residues 107 to 127 (RRRVRRERNKLAAAKCRNRRK) form a basic motif region. The interval 133–161 (LQAETDKLEDEKSGLQREIEELQKQKERL) is leucine-zipper. Residues 169–182 (RPICKIPEGDKKDP) show a composition bias toward basic and acidic residues. The tract at residues 169 to 273 (RPICKIPEGD…PLGSPTLLAL (105 aa)) is disordered. Composition is skewed to low complexity over residues 217 to 235 (LHTP…TPSL) and 254 to 273 (SSSS…LLAL). Ser267 is subject to Phosphoserine.

It belongs to the bZIP family. Fos subfamily. In terms of assembly, heterodimer. Interacts with the BAF multiprotein chromatin-remodeling complex subunits SMARCB1 and SMARCD1. Interacts with ARID1A and JUN.

It localises to the nucleus. The protein is Fos-related antigen 1 (Fosl1) of Mus musculus (Mouse).